A 465-amino-acid chain; its full sequence is Hepatocyte nuclear factor 6 (465 aa).

4 disordered regions span residues 17-55 (SHEPVPAPADLLGGSPHARSSVAHRGSHLPPAHPRSMGM), 120-141 (DKFPHHHHHHHHHHHPHHHQRL), 264-290 (LLGTAREPNPSVTGAQVSNGSNSGQME), and 442-465 (DKWQDEGSSNSGNSSSSSSTCTKA). A compositionally biased stretch (basic residues) spans 123-140 (PHHHHHHHHHHHPHHHQR). A compositionally biased stretch (polar residues) spans 273-288 (PSVTGAQVSNGSNSGQ). A DNA-binding region (CUT) is located at residues 283–369 (GSNSGQMEEI…QRMSALRLAA (87 aa)). Positions 385–444 (PKKPRLVFTDVQRRTLHAIFKENKRPSKELQITISQQLGLELSTVSNFFMNARRRSLDKW) form a DNA-binding region, homeobox. The segment covering 448–465 (GSSNSGNSSSSSSTCTKA) has biased composition (low complexity).

It belongs to the CUT homeobox family. As to quaternary structure, binds DNA as a monomer. As to expression, highly expressed in liver; lower expression in testis and skin.

Its subcellular location is the nucleus. Its function is as follows. Transcriptional activator. Binds the consensus sequence 5'-DHWATTGAYTWWD-3' on a variety of gene promoters such as those of HNF3B and TTR. Important for liver genes transcription. The protein is Hepatocyte nuclear factor 6 (ONECUT1) of Homo sapiens (Human).